Reading from the N-terminus, the 689-residue chain is DNA topoisomerase 1 (689 aa).

The Toprim domain occupies aspartate 3–isoleucine 113. Mg(2+) contacts are provided by glutamate 9 and aspartate 82. Positions glutamate 129–glutamate 557 constitute a Topo IA-type catalytic domain. The interval serine 163–glutamine 168 is interaction with DNA. Residue tyrosine 298 is the O-(5'-phospho-DNA)-tyrosine intermediate of the active site. The interval serine 328 to methionine 357 is disordered. 3 C4-type zinc fingers span residues cysteine 577–cysteine 603, cysteine 617–cysteine 645, and cysteine 658–cysteine 681.

It belongs to the type IA topoisomerase family. As to quaternary structure, monomer. Mg(2+) serves as cofactor.

The enzyme catalyses ATP-independent breakage of single-stranded DNA, followed by passage and rejoining.. In terms of biological role, releases the supercoiling and torsional tension of DNA, which is introduced during the DNA replication and transcription, by transiently cleaving and rejoining one strand of the DNA duplex. Introduces a single-strand break via transesterification at a target site in duplex DNA. The scissile phosphodiester is attacked by the catalytic tyrosine of the enzyme, resulting in the formation of a DNA-(5'-phosphotyrosyl)-enzyme intermediate and the expulsion of a 3'-OH DNA strand. The free DNA strand then undergoes passage around the unbroken strand, thus removing DNA supercoils. Finally, in the religation step, the DNA 3'-OH attacks the covalent intermediate to expel the active-site tyrosine and restore the DNA phosphodiester backbone. The protein is DNA topoisomerase 1 of Staphylococcus aureus (strain bovine RF122 / ET3-1).